The following is a 152-amino-acid chain: Transcriptional repressor NrdR (152 aa).

The segment covering 1 to 10 has biased composition (polar residues); the sequence is MKCPSCQHNG. A disordered region spans residues 1 to 21; sequence MKCPSCQHNGSRVLDSRPADE. A zinc finger spans residues 3–34; it reads CPSCQHNGSRVLDSRPADEGKSIRRRRECEAC. The ATP-cone domain occupies 49–139; sequence LIVVKKEGVR…VYRQFKDINV (91 aa).

It belongs to the NrdR family. It depends on Zn(2+) as a cofactor.

In terms of biological role, negatively regulates transcription of bacterial ribonucleotide reductase nrd genes and operons by binding to NrdR-boxes. The sequence is that of Transcriptional repressor NrdR from Bacillus velezensis (strain DSM 23117 / BGSC 10A6 / LMG 26770 / FZB42) (Bacillus amyloliquefaciens subsp. plantarum).